The primary structure comprises 186 residues: UPF0200 protein PH1008 (186 aa).

7–14 (GMPGSGKG) is an ATP binding site.

It belongs to the UPF0200 family.

In Pyrococcus horikoshii (strain ATCC 700860 / DSM 12428 / JCM 9974 / NBRC 100139 / OT-3), this protein is UPF0200 protein PH1008.